Reading from the N-terminus, the 597-residue chain is Elongation factor 4 (597 aa).

The tr-type G domain occupies 2–184 (DHIRNFSIIA…SLIAKVPPPK (183 aa)). GTP is bound by residues 14–19 (DHGKST) and 131–134 (NKID).

This sequence belongs to the TRAFAC class translation factor GTPase superfamily. Classic translation factor GTPase family. LepA subfamily.

It localises to the cell inner membrane. The enzyme catalyses GTP + H2O = GDP + phosphate + H(+). Required for accurate and efficient protein synthesis under certain stress conditions. May act as a fidelity factor of the translation reaction, by catalyzing a one-codon backward translocation of tRNAs on improperly translocated ribosomes. Back-translocation proceeds from a post-translocation (POST) complex to a pre-translocation (PRE) complex, thus giving elongation factor G a second chance to translocate the tRNAs correctly. Binds to ribosomes in a GTP-dependent manner. This is Elongation factor 4 from Burkholderia ambifaria (strain MC40-6).